The primary structure comprises 197 residues: Ribonuclease HII (197 aa).

Residues 9–197 (KLIAGVDEVG…APVKKALEQF (189 aa)) enclose the RNase H type-2 domain. A divalent metal cation-binding residues include Asp-15, Glu-16, and Asp-107.

This sequence belongs to the RNase HII family. Mn(2+) serves as cofactor. Requires Mg(2+) as cofactor.

The protein resides in the cytoplasm. It carries out the reaction Endonucleolytic cleavage to 5'-phosphomonoester.. Its function is as follows. Endonuclease that specifically degrades the RNA of RNA-DNA hybrids. The chain is Ribonuclease HII from Haemophilus influenzae (strain PittEE).